The sequence spans 410 residues: MSRDPKLSLSKFLECLNEIEHEFLRDKVEHRPVLVRKLQELQQKTPKHVAKLPHEPEMIQQIHQAAHRIDIVAQAFIRFDQKFVSLCSEIVHDTTKVMQEANVVSPGEGCRNLSEDLPAYHMRNHFLHTLENPYPTQEEKEGLVRLTNESTARIRPSNAIRPPLEVHQLTLWFINARRRSGWSHILKKFAREDPSRMKRLVRAKLSSSNQSTPPSLTSEKPSDDLDVVLSDNLGRPLTLADKQQFEDDWASMISWIKYGVKEKVGDWVYDLCAASKKTPKPGMPRPVTTVAKRHPARKTKPAAKPKSRTANPRASTTPSIDSTLDSSKLESTPELSMCSTADTSFSTFGSSLSMSHYNPFQDGNDILQSPTVKARGNRKVKALPKRAGKQQPDEVDNGKIPFLCLSVAFV.

Positions 1–110 (MSRDPKLSLS…ANVVSPGEGC (110 aa)) are variable domain between B alleles. The segment at residues 107–184 (GEGCRNLSED…NARRRSGWSH (78 aa)) is a DNA-binding region (homeobox; TALE-type). The tract at residues 111–410 (RNLSEDLPAY…PFLCLSVAFV (300 aa)) is highly conserved between B alleles. Disordered regions lie at residues 203-224 (AKLS…PSDD) and 278-335 (TPKP…TPEL). Residues 205 to 219 (LSSSNQSTPPSLTSE) show a composition bias toward polar residues. Residues 276 to 308 (KKTPKPGMPRPVTTVAKRHPARKTKPAAKPKSR) carry the Nuclear localization signal motif. The span at 291–307 (AKRHPARKTKPAAKPKS) shows a compositional bias: basic residues. Polar residues predominate over residues 312-335 (PRASTTPSIDSTLDSSKLESTPEL). The not essential for B3 function stretch occupies residues 333 to 410 (PELSMCSTAD…PFLCLSVAFV (78 aa)).

This sequence belongs to the TALE/M-ATYP homeobox family.

The protein localises to the nucleus. The B locus has at least 25 alleles, and any combination of two different B alleles yields a multimeric regulatory protein, that activates genes responsible for the pathogenicity and for the sexual development of the fungus within the corn plant. The protein is Mating-type locus allele B3 protein of Mycosarcoma maydis (Corn smut fungus).